The sequence spans 93 residues: Small ribosomal subunit protein uS19c (93 aa).

The protein belongs to the universal ribosomal protein uS19 family.

Its subcellular location is the plastid. It is found in the chloroplast. In terms of biological role, protein S19 forms a complex with S13 that binds strongly to the 16S ribosomal RNA. The protein is Small ribosomal subunit protein uS19c of Zygnema circumcarinatum (Green alga).